A 1009-amino-acid chain; its full sequence is Ulvan lyase, long isoform (1009 aa).

A signal peptide spans 1–32 (MTAQKSKYFNRIMTMNTLLFSLLTVGFSQAYA). 137–138 (SH) serves as a coordination point for substrate. The active-site Proton donor/acceptor is the His-138. Ca(2+) contacts are provided by Asp-200, Asp-210, and Lys-212. Tyr-291 and Arg-308 together coordinate substrate. Residues Asp-311, Asp-314, and Tyr-316 each coordinate Ca(2+). Tyr-372 serves as a coordination point for substrate.

The protein belongs to the polysaccharide lyase 24 family.

Its function is as follows. Ulvan lyase involved in ulvan degradation. Ulvan is the main polysaccharide component of the Ulvales (green seaweed) cell wall. It is composed of disaccharide building blocks comprising 3-sulfated rhamnose (Rha3S) linked to D-glucuronic acid (GlcA), L-iduronic acid (IduA), or D-xylose (Xyl). Ulvan lyase catalyzes preferentially the endolytic cleavage of the glycosidic bond between Rha3S and the uronic acid GlcA, but not IduA, producing oligosaccharides that have unsaturated 4-deoxy-L-threo-hex-4-enopyranosiduronic acid (deltaUA) at the non-reducing end. The most abundant end products in the degradation of the ulvan polysaccharide were deltaUA-Rha3S disaccharides and deltaUA-Rha3S-IduA-Rha3S and deltaUA-Rha3S-Xyl-Rha3S tetrasaccharides. This Glaciecola sp. (strain KUL10) protein is Ulvan lyase, long isoform (ullA).